Here is a 177-residue protein sequence, read N- to C-terminus: MSRIAKAPITVPSGVEVVVNGQNVAVKGNKGELVCLLNDAVVIKLEEGVIRFAPAEGFKDGWAQAGTARANVNNMVLGVTEGFKKTLLLQGVGYRAQVAGTIVNLTLGFSHPVAYQLPEGITAVAKSQTEIILEGADKQVVGQAAAKIRAFRPPEPYKGKGVRYANEIVRRKEAKKK.

It belongs to the universal ribosomal protein uL6 family. As to quaternary structure, part of the 50S ribosomal subunit.

Its function is as follows. This protein binds to the 23S rRNA, and is important in its secondary structure. It is located near the subunit interface in the base of the L7/L12 stalk, and near the tRNA binding site of the peptidyltransferase center. In Psychromonas ingrahamii (strain DSM 17664 / CCUG 51855 / 37), this protein is Large ribosomal subunit protein uL6.